A 160-amino-acid polypeptide reads, in one-letter code: MNKFKYTLAIIKPDILVKQNQNVDKIINKIESKFIIHQRKQIKLSLEEAEQFYKDHRGKFFYERLISFMTRGDIIPLILSDKSLEINNNNNNNNNNTSIKPWRDFIGPTHRDKAREQIGCLRGEYGTSDTRNAFHGSGSEEEAIDEINFFFPHFLENNKK.

ATP contacts are provided by lysine 12, phenylalanine 61, arginine 103, threonine 109, arginine 122, and asparagine 132. Histidine 135 (pros-phosphohistidine intermediate) is an active-site residue.

Belongs to the NDK family. Mg(2+) is required as a cofactor.

It carries out the reaction a 2'-deoxyribonucleoside 5'-diphosphate + ATP = a 2'-deoxyribonucleoside 5'-triphosphate + ADP. It catalyses the reaction a ribonucleoside 5'-diphosphate + ATP = a ribonucleoside 5'-triphosphate + ADP. In Dictyostelium discoideum (Social amoeba), this protein is Probable nucleoside diphosphate kinase DDB_G0292928.